The primary structure comprises 809 residues: Eukaryotic translation initiation factor 3 subunit C (809 aa).

The segment at 1–102 (MSRFFAASYE…DSDESDEASK (102 aa)) is disordered. Acidic residues-rich tracts occupy residues 18 to 30 (SEED…EEEL) and 37 to 59 (SEEE…DSDD). In terms of domain architecture, PCI spans 605–780 (FHEHINLDLI…SVLSIAKGAE (176 aa)).

This sequence belongs to the eIF-3 subunit C family. Component of the eukaryotic translation initiation factor 3 (eIF-3) complex.

The protein resides in the cytoplasm. In terms of biological role, component of the eukaryotic translation initiation factor 3 (eIF-3) complex, which is involved in protein synthesis of a specialized repertoire of mRNAs and, together with other initiation factors, stimulates binding of mRNA and methionyl-tRNAi to the 40S ribosome. The eIF-3 complex specifically targets and initiates translation of a subset of mRNAs involved in cell proliferation. This is Eukaryotic translation initiation factor 3 subunit C from Vanderwaltozyma polyspora (strain ATCC 22028 / DSM 70294 / BCRC 21397 / CBS 2163 / NBRC 10782 / NRRL Y-8283 / UCD 57-17) (Kluyveromyces polysporus).